The primary structure comprises 126 residues: MADMAKFEEEVNKLRTLEKDREKYFTSRQEMEMRLTESKNVKAELDLMESDSKVYKLIGAVLVRQDLEEARSTVEKRLEFIDSETKRVEASISDISKKCTEQRDKVMNMQKSFQMMAQAAAQAQKK.

It belongs to the prefoldin subunit beta family. As to quaternary structure, heterohexamer of two PFD-alpha type and four PFD-beta type subunits. Expressed in embryonic blastomeres and gonads.

The protein resides in the cytoplasm. Its function is as follows. Binds specifically to cytosolic chaperonin (c-CPN) and transfers target proteins to it. Binds to nascent polypeptide chain and promotes folding in an environment in which there are many competing pathways for nonnative proteins. Required for positioning of the mitotic spindle. In Caenorhabditis elegans, this protein is Probable prefoldin subunit 6 (pfd-6).